The primary structure comprises 951 residues: Bifunctional glutamine synthetase adenylyltransferase/adenylyl-removing enzyme (951 aa).

The adenylyl removase stretch occupies residues 1–440 (MLPLPSELQI…VFDDLIGDET (440 aa)). The adenylyl transferase stretch occupies residues 449–951 (HGLYKSLWQD…WLAANDANVS (503 aa)).

The protein belongs to the GlnE family. Mg(2+) is required as a cofactor.

The enzyme catalyses [glutamine synthetase]-O(4)-(5'-adenylyl)-L-tyrosine + phosphate = [glutamine synthetase]-L-tyrosine + ADP. It carries out the reaction [glutamine synthetase]-L-tyrosine + ATP = [glutamine synthetase]-O(4)-(5'-adenylyl)-L-tyrosine + diphosphate. Its function is as follows. Involved in the regulation of glutamine synthetase GlnA, a key enzyme in the process to assimilate ammonia. When cellular nitrogen levels are high, the C-terminal adenylyl transferase (AT) inactivates GlnA by covalent transfer of an adenylyl group from ATP to specific tyrosine residue of GlnA, thus reducing its activity. Conversely, when nitrogen levels are low, the N-terminal adenylyl removase (AR) activates GlnA by removing the adenylyl group by phosphorolysis, increasing its activity. The regulatory region of GlnE binds the signal transduction protein PII (GlnB) which indicates the nitrogen status of the cell. The chain is Bifunctional glutamine synthetase adenylyltransferase/adenylyl-removing enzyme from Yersinia pseudotuberculosis serotype O:1b (strain IP 31758).